Here is a 256-residue protein sequence, read N- to C-terminus: UPF0246 protein TERTU_4575 (256 aa).

This sequence belongs to the UPF0246 family.

In Teredinibacter turnerae (strain ATCC 39867 / T7901), this protein is UPF0246 protein TERTU_4575.